The following is a 363-amino-acid chain: Homeobox protein Hox-A2a (363 aa).

Disordered stretches follow at residues 30-88, 98-117, 189-220, and 268-308; these read DSFQ…LPPE, SKRNHLPNSTTTTISNGPVC, RMKHKRQTQSKENHNAEGKGPSTEEGIHSDEE, and DKNL…LDVS. Residues 31–44 show a composition bias toward polar residues; sequence SFQSSSIKSSTLSR. The Antp-type hexapeptide signature appears at 88-93; the sequence is EYPWMR. The span at 103-113 shows a compositional bias: polar residues; it reads LPNSTTTTISN. A DNA-binding region (homeobox) is located at residues 137-196; sequence SRRLRTAYTNTQLLELEKEFHFNKYLCRPRRVEIAALLDLTERQVKVWFQNRRMKHKRQT.

This sequence belongs to the Antp homeobox family. Proboscipedia subfamily.

It localises to the nucleus. Its function is as follows. Sequence-specific transcription factor which is part of a developmental regulatory system that provides cells with specific positional identities on the anterior-posterior axis. The polypeptide is Homeobox protein Hox-A2a (hoxa2a) (Takifugu rubripes (Japanese pufferfish)).